The chain runs to 185 residues: Elongation factor P (185 aa).

The protein belongs to the elongation factor P family.

It is found in the cytoplasm. Its pathway is protein biosynthesis; polypeptide chain elongation. In terms of biological role, involved in peptide bond synthesis. Stimulates efficient translation and peptide-bond synthesis on native or reconstituted 70S ribosomes in vitro. Probably functions indirectly by altering the affinity of the ribosome for aminoacyl-tRNA, thus increasing their reactivity as acceptors for peptidyl transferase. This Dechloromonas aromatica (strain RCB) protein is Elongation factor P.